A 464-amino-acid polypeptide reads, in one-letter code: Glutamate--tRNA ligase (464 aa).

A 'HIGH' region motif is present at residues 9-19 (PSPTGYLHIGG). The 'KMSKS' region signature appears at 242-246 (KISKR). Lysine 245 lines the ATP pocket.

This sequence belongs to the class-I aminoacyl-tRNA synthetase family. Glutamate--tRNA ligase type 1 subfamily. In terms of assembly, monomer.

The protein localises to the cytoplasm. It catalyses the reaction tRNA(Glu) + L-glutamate + ATP = L-glutamyl-tRNA(Glu) + AMP + diphosphate. Its function is as follows. Catalyzes the attachment of glutamate to tRNA(Glu) in a two-step reaction: glutamate is first activated by ATP to form Glu-AMP and then transferred to the acceptor end of tRNA(Glu). In Neisseria meningitidis serogroup C (strain 053442), this protein is Glutamate--tRNA ligase.